A 161-amino-acid chain; its full sequence is Nucleotide-binding protein Bxeno_A3642 (161 aa).

Belongs to the YajQ family.

Nucleotide-binding protein. The sequence is that of Nucleotide-binding protein Bxeno_A3642 from Paraburkholderia xenovorans (strain LB400).